A 76-amino-acid chain; its full sequence is Acyl carrier protein (76 aa).

The Carrier domain occupies 1-76 (MSIEERVKKI…SAIDYVQNNQ (76 aa)). Ser36 bears the O-(pantetheine 4'-phosphoryl)serine mark.

Belongs to the acyl carrier protein (ACP) family. Post-translationally, 4'-phosphopantetheine is transferred from CoA to a specific serine of apo-ACP by AcpS. This modification is essential for activity because fatty acids are bound in thioester linkage to the sulfhydryl of the prosthetic group.

Its subcellular location is the cytoplasm. Its pathway is lipid metabolism; fatty acid biosynthesis. Its function is as follows. Carrier of the growing fatty acid chain in fatty acid biosynthesis. The protein is Acyl carrier protein of Mannheimia succiniciproducens (strain KCTC 0769BP / MBEL55E).